A 281-amino-acid chain; its full sequence is 2-dehydro-3-deoxyphosphooctonate aldolase (281 aa).

It belongs to the KdsA family.

The protein resides in the cytoplasm. The enzyme catalyses D-arabinose 5-phosphate + phosphoenolpyruvate + H2O = 3-deoxy-alpha-D-manno-2-octulosonate-8-phosphate + phosphate. It participates in carbohydrate biosynthesis; 3-deoxy-D-manno-octulosonate biosynthesis; 3-deoxy-D-manno-octulosonate from D-ribulose 5-phosphate: step 2/3. Its pathway is bacterial outer membrane biogenesis; lipopolysaccharide biosynthesis. The protein is 2-dehydro-3-deoxyphosphooctonate aldolase of Stutzerimonas stutzeri (strain A1501) (Pseudomonas stutzeri).